The primary structure comprises 295 residues: Phosphonoacetaldehyde hydrolase (295 aa).

Aspartate 36 (nucleophile) is an active-site residue. Residues aspartate 36 and alanine 38 each contribute to the Mg(2+) site. The active-site Schiff-base intermediate with substrate is the lysine 78. Aspartate 212 is a binding site for Mg(2+).

This sequence belongs to the HAD-like hydrolase superfamily. PhnX family. Homodimer. It depends on Mg(2+) as a cofactor.

It carries out the reaction phosphonoacetaldehyde + H2O = acetaldehyde + phosphate + H(+). Functionally, involved in phosphonate degradation. This chain is Phosphonoacetaldehyde hydrolase, found in Psychromonas ingrahamii (strain DSM 17664 / CCUG 51855 / 37).